Reading from the N-terminus, the 351-residue chain is Probable cell division control protein 7 homolog 2 (351 aa).

The region spanning 21 to 341 is the Protein kinase domain; that stretch reads YTPIEKIGEG…ASDALSHPFF (321 aa). Residues 27–35 and Lys-50 each bind ATP; that span reads IGEGSFSVV. Asp-137 acts as the Proton acceptor in catalysis.

The protein belongs to the protein kinase superfamily. Ser/Thr protein kinase family. CDC7 subfamily. Requires Mg(2+) as cofactor.

The catalysed reaction is L-seryl-[protein] + ATP = O-phospho-L-seryl-[protein] + ADP + H(+). It catalyses the reaction L-threonyl-[protein] + ATP = O-phospho-L-threonyl-[protein] + ADP + H(+). Serine/threonine-protein kinase. Needed for the initiation of DNA synthesis during mitosis as well as for synaptonemal complex formation and commitment to recombination during meiosis. The chain is Probable cell division control protein 7 homolog 2 (CDC7-2) from Encephalitozoon cuniculi (strain GB-M1) (Microsporidian parasite).